The following is a 639-amino-acid chain: Mediator of RNA polymerase II transcription subunit 17 (639 aa).

A coiled-coil region spans residues 160 to 187; that stretch reads RLQNFNAAADKLLKSASRLENEVASETR.

This sequence belongs to the Mediator complex subunit 17 family. Component of the Mediator complex.

It localises to the nucleus. Component of the Mediator complex, a coactivator involved in the regulated transcription of nearly all RNA polymerase II-dependent genes. Mediator functions as a bridge to convey information from gene-specific regulatory proteins to the basal RNA polymerase II transcription machinery. Mediator is recruited to promoters by direct interactions with regulatory proteins and serves as a scaffold for the assembly of a functional preinitiation complex with RNA polymerase II and the general transcription factors. The chain is Mediator of RNA polymerase II transcription subunit 17 (srb4) from Neosartorya fischeri (strain ATCC 1020 / DSM 3700 / CBS 544.65 / FGSC A1164 / JCM 1740 / NRRL 181 / WB 181) (Aspergillus fischerianus).